Reading from the N-terminus, the 254-residue chain is 3-dehydroquinate dehydratase (254 aa).

Residues 47–49 and Arg-83 contribute to the 3-dehydroquinate site; that span reads EFR. Residue His-144 is the Proton donor/acceptor of the active site. The active-site Schiff-base intermediate with substrate is the Lys-171. Positions 213, 232, and 236 each coordinate 3-dehydroquinate.

The protein belongs to the type-I 3-dehydroquinase family. In terms of assembly, homodimer.

It catalyses the reaction 3-dehydroquinate = 3-dehydroshikimate + H2O. It participates in metabolic intermediate biosynthesis; chorismate biosynthesis; chorismate from D-erythrose 4-phosphate and phosphoenolpyruvate: step 3/7. Functionally, involved in the third step of the chorismate pathway, which leads to the biosynthesis of aromatic amino acids. Catalyzes the cis-dehydration of 3-dehydroquinate (DHQ) and introduces the first double bond of the aromatic ring to yield 3-dehydroshikimate. In Neisseria gonorrhoeae (strain ATCC 700825 / FA 1090), this protein is 3-dehydroquinate dehydratase.